Here is a 69-residue protein sequence, read N- to C-terminus: MSESQLKKVLKENETLKAQLEKSTTILKVSEACESLQDYCTKTSDPFIPGWSGENEWTKPLKGNGCSVL.

Ser2 is modified (N-acetylserine). At Cys66 the chain carries Cysteine methyl ester. Cys66 carries S-geranylgeranyl cysteine lipidation. The propeptide at 67 to 69 (SVL) is removed in mature form.

This sequence belongs to the G protein gamma family. As to quaternary structure, g proteins are composed of 3 units, alpha, beta and gamma. Interacts with gpbA, and this requires phlp1. Post-translationally, this protein is thought to be subject to lipidation, and this requires phlp1.

It localises to the cell membrane. Functionally, guanine nucleotide-binding proteins (G proteins) are involved as a modulator or transducer in various transmembrane signaling systems. This major G-protein of the squid photoreceptor is involved in visual transduction. The beta and gamma chains are required for the GTPase activity, for replacement of GDP by GTP, and for G protein-effector interaction. Required for normal chemotaxis in response to cAMP. The sequence is that of Guanine nucleotide-binding protein subunit gamma (gpgA) from Dictyostelium discoideum (Social amoeba).